A 301-amino-acid polypeptide reads, in one-letter code: Glycine--tRNA ligase alpha subunit (301 aa).

It belongs to the class-II aminoacyl-tRNA synthetase family. As to quaternary structure, tetramer of two alpha and two beta subunits.

It is found in the cytoplasm. The enzyme catalyses tRNA(Gly) + glycine + ATP = glycyl-tRNA(Gly) + AMP + diphosphate. The sequence is that of Glycine--tRNA ligase alpha subunit from Shewanella oneidensis (strain ATCC 700550 / JCM 31522 / CIP 106686 / LMG 19005 / NCIMB 14063 / MR-1).